A 227-amino-acid chain; its full sequence is PKHD-type hydroxylase GOX0559 (227 aa).

The 101-residue stretch at 78-178 (RVYPPLFNRY…RWASFFWSQS (101 aa)) folds into the Fe2OG dioxygenase domain. Fe cation is bound by residues H96, D98, and H159. Position 169 (R169) interacts with 2-oxoglutarate.

The cofactor is Fe(2+). L-ascorbate is required as a cofactor.

This Gluconobacter oxydans (strain 621H) (Gluconobacter suboxydans) protein is PKHD-type hydroxylase GOX0559.